The sequence spans 186 residues: Large ribosomal subunit protein uL16 (186 aa).

Belongs to the universal ribosomal protein uL16 family.

This is Large ribosomal subunit protein uL16 from Nanoarchaeum equitans (strain Kin4-M).